Consider the following 326-residue polypeptide: Ankyrin repeat domain-containing protein 9 (326 aa).

Residues 1–20 (MPWDTRPGRSANGGPEGPGA) are disordered. The stretch at 70-99 (SPSEALLYALVHDHQAYAHYLLATFPRCAL) is one ANK 1 repeat. The short motif at 108-109 (CC) is the Important role in both nutrient sensing and binding/regulation of IMPDH2 element. ANK repeat units lie at residues 111 to 140 (APGPHVALAVRYNRVGILRRILRTVQDFPV) and 157 to 186 (GGGTSLHVACELARPECLFLLLGHGASPGL).

As to quaternary structure, part of an E3 ubiquitin-protein ligase complex with Elongin BC (ELOB and ELOC), CUL5 and ANKRD9. Interacts with IMPDH2; leading to ubiquitination of IMPDH2 and its subsequent proteasomal degradation.

It is found in the cytoplasmic vesicle. The protein localises to the cytoplasm. Its subcellular location is the cytosol. It functions in the pathway protein modification; protein ubiquitination. Functionally, substrate receptor subunit of a cullin-RING superfamily E3 ligase complex (CUL5-based E3 ubiquitin ligase complex) which mediates the ubiquitination and subsequent proteasomal degradation of target proteins. Depending of the metabolic state of the cell, promotes the proteasomal degradation of IMPDH2, the rate-limiting enzyme in GTP biosynthesis or protects IMPDH2 by stabilizing IMPDH2 filaments assembly. Implicated in different cellular processes, like copper homeostasis and cell proliferation. In Mus musculus (Mouse), this protein is Ankyrin repeat domain-containing protein 9 (Ankrd9).